The following is a 550-amino-acid chain: Methionine--tRNA ligase (550 aa).

Residues 13-23 (PYANGPLHFGH) carry the 'HIGH' region motif. 4 residues coordinate Zn(2+): C145, C148, C158, and C161. Residues 331 to 335 (QFSKS) carry the 'KMSKS' region motif. K334 contributes to the ATP binding site.

Belongs to the class-I aminoacyl-tRNA synthetase family. MetG type 1 subfamily. In terms of assembly, monomer. It depends on Zn(2+) as a cofactor.

The protein resides in the cytoplasm. It carries out the reaction tRNA(Met) + L-methionine + ATP = L-methionyl-tRNA(Met) + AMP + diphosphate. In terms of biological role, is required not only for elongation of protein synthesis but also for the initiation of all mRNA translation through initiator tRNA(fMet) aminoacylation. This is Methionine--tRNA ligase (metG) from Chlamydia trachomatis serovar D (strain ATCC VR-885 / DSM 19411 / UW-3/Cx).